The primary structure comprises 381 residues: Succinyl-diaminopimelate desuccinylase (381 aa).

Zn(2+) is bound at residue H71. The active site involves D73. Residue D104 participates in Zn(2+) binding. Catalysis depends on E136, which acts as the Proton acceptor. Residues E137, E166, and H351 each contribute to the Zn(2+) site.

This sequence belongs to the peptidase M20A family. DapE subfamily. In terms of assembly, homodimer. Zn(2+) is required as a cofactor. The cofactor is Co(2+).

The catalysed reaction is N-succinyl-(2S,6S)-2,6-diaminopimelate + H2O = (2S,6S)-2,6-diaminopimelate + succinate. It participates in amino-acid biosynthesis; L-lysine biosynthesis via DAP pathway; LL-2,6-diaminopimelate from (S)-tetrahydrodipicolinate (succinylase route): step 3/3. Its function is as follows. Catalyzes the hydrolysis of N-succinyl-L,L-diaminopimelic acid (SDAP), forming succinate and LL-2,6-diaminopimelate (DAP), an intermediate involved in the bacterial biosynthesis of lysine and meso-diaminopimelic acid, an essential component of bacterial cell walls. The chain is Succinyl-diaminopimelate desuccinylase from Ehrlichia chaffeensis (strain ATCC CRL-10679 / Arkansas).